A 158-amino-acid polypeptide reads, in one-letter code: CD-NTase/cGAS isopeptidase (158 aa).

The active-site Proton donor/acceptor is E38. Zn(2+) is bound by residues H100, H102, and D113.

The protein belongs to the peptidase M67B family. Cap3 isopeptidase subfamily.

Functionally, metalloprotease priming reversal component of a CBASS antivirus system. CBASS (cyclic oligonucleotide-based antiphage signaling system) provides immunity against bacteriophages. The CD-NTase protein synthesizes cyclic nucleotides in response to infection; these serve as specific second messenger signals. The signals activate a diverse range of effectors, leading to bacterial cell death and thus abortive phage infection. A type II-A(GA) CBASS system. In terms of biological role, reverses the primed state of CdnA, the CD-NTase. The capV-cdnA-cap2-cap3 operon provides about 10(4)-fold protection in strain BWHPSA011 against infection by phage PaMx41. In P.aeruginosa strain PAO1 it confers protection against phages PaMx41 and JBD18 but not JBD67 (JBD18 and JBD67 do not replicate in BWHPSA011 / Pa011). When acb2 in JBD67 is deleted this CBASS operon then protects against JDB67 also. This CBASS system limits prophage induction of lysogenized JBD67 as well as viral lytic replication. The chain is CD-NTase/cGAS isopeptidase from Pseudomonas aeruginosa (strain BWHPSA011 / Pa011).